Consider the following 135-residue polypeptide: Snaclec echicetin subunit alpha (135 aa).

The signal sequence occupies residues 1 to 4; sequence GADE. Cystine bridges form between cysteine 6-cysteine 17, cysteine 34-cysteine 129, and cysteine 104-cysteine 121. The region spanning 13–130 is the C-type lectin domain; the sequence is NGVYCYMLFK…CENTFPFMCK (118 aa).

Belongs to the snaclec family. Heterodimer of subunits alpha and beta; disulfide-linked. Expressed by the venom gland.

Its subcellular location is the secreted. Binding of echicetin to GPIbalpha (GP1BA) receptor on platelets alone results in inhibition of platelet aggregation, while binding to both GP1BA receptor and IgMk promotes platelet aggregation and signal transduction. This Echis carinatus (Saw-scaled viper) protein is Snaclec echicetin subunit alpha.